The sequence spans 475 residues: Ammonium transporter 2 (475 aa).

The next 11 membrane-spanning stretches (helical) occupy residues alanine 27–valine 47, serine 55–tyrosine 75, leucine 120–leucine 140, tryptophan 148–tryptophan 168, glycine 183–glycine 203, valine 218–glycine 238, threonine 254–glycine 274, isoleucine 279–isoleucine 299, tryptophan 302–isoleucine 322, leucine 336–phenylalanine 356, and alanine 389–isoleucine 409.

Belongs to the ammonia transporter channel (TC 1.A.11.2) family. As to expression, higher expression in shoots than roots.

The protein localises to the cell membrane. High affinity ammonium transporter that may play an important role in moving ammonium between the apoplast and symplast of cells throughout the plant. Does not transport methylammonium. In Arabidopsis thaliana (Mouse-ear cress), this protein is Ammonium transporter 2 (AMT2).